The following is a 426-amino-acid chain: 5-methylthioadenosine/S-adenosylhomocysteine deaminase (426 aa).

Residues histidine 60 and histidine 62 each coordinate Zn(2+). Substrate contacts are provided by glutamate 89 and histidine 179. Histidine 206 lines the Zn(2+) pocket. Substrate contacts are provided by glutamate 209 and aspartate 294. Aspartate 294 is a binding site for Zn(2+).

Belongs to the metallo-dependent hydrolases superfamily. MTA/SAH deaminase family. Requires Zn(2+) as cofactor.

The enzyme catalyses S-adenosyl-L-homocysteine + H2O + H(+) = S-inosyl-L-homocysteine + NH4(+). It catalyses the reaction S-methyl-5'-thioadenosine + H2O + H(+) = S-methyl-5'-thioinosine + NH4(+). Functionally, catalyzes the deamination of 5-methylthioadenosine and S-adenosyl-L-homocysteine into 5-methylthioinosine and S-inosyl-L-homocysteine, respectively. Is also able to deaminate adenosine. The polypeptide is 5-methylthioadenosine/S-adenosylhomocysteine deaminase (Dictyoglomus turgidum (strain DSM 6724 / Z-1310)).